Reading from the N-terminus, the 158-residue chain is uncharacterized protein (158 aa).

It is found in the mitochondrion. This is an uncharacterized protein from Arabidopsis thaliana (Mouse-ear cress).